The following is a 203-amino-acid chain: ATP-dependent Clp protease proteolytic subunit (203 aa).

Catalysis depends on Ser103, which acts as the Nucleophile. His128 is an active-site residue.

This sequence belongs to the peptidase S14 family. In terms of assembly, fourteen ClpP subunits assemble into 2 heptameric rings which stack back to back to give a disk-like structure with a central cavity, resembling the structure of eukaryotic proteasomes.

The protein resides in the cytoplasm. It catalyses the reaction Hydrolysis of proteins to small peptides in the presence of ATP and magnesium. alpha-casein is the usual test substrate. In the absence of ATP, only oligopeptides shorter than five residues are hydrolyzed (such as succinyl-Leu-Tyr-|-NHMec, and Leu-Tyr-Leu-|-Tyr-Trp, in which cleavage of the -Tyr-|-Leu- and -Tyr-|-Trp bonds also occurs).. Cleaves peptides in various proteins in a process that requires ATP hydrolysis. Has a chymotrypsin-like activity. Plays a major role in the degradation of misfolded proteins. This is ATP-dependent Clp protease proteolytic subunit from Nitrosococcus oceani (strain ATCC 19707 / BCRC 17464 / JCM 30415 / NCIMB 11848 / C-107).